The chain runs to 190 residues: dTTP/UTP pyrophosphatase (190 aa).

The active-site Proton acceptor is Asp-71.

The protein belongs to the Maf family. YhdE subfamily. It depends on a divalent metal cation as a cofactor.

It is found in the cytoplasm. It carries out the reaction dTTP + H2O = dTMP + diphosphate + H(+). The enzyme catalyses UTP + H2O = UMP + diphosphate + H(+). Its function is as follows. Nucleoside triphosphate pyrophosphatase that hydrolyzes dTTP and UTP. May have a dual role in cell division arrest and in preventing the incorporation of modified nucleotides into cellular nucleic acids. The polypeptide is dTTP/UTP pyrophosphatase (Xanthomonas axonopodis pv. citri (strain 306)).